The sequence spans 140 residues: Small ribosomal subunit protein uS12 (140 aa).

A disordered region spans residues 33–55; the sequence is KEQTNVSSPQKRGVCTRVGTMTP.

This sequence belongs to the universal ribosomal protein uS12 family. Part of the 30S ribosomal subunit. Contacts proteins S8 and S17. May interact with IF1 in the 30S initiation complex.

In terms of biological role, with S4 and S5 plays an important role in translational accuracy. Interacts with and stabilizes bases of the 16S rRNA that are involved in tRNA selection in the A site and with the mRNA backbone. Located at the interface of the 30S and 50S subunits, it traverses the body of the 30S subunit contacting proteins on the other side and probably holding the rRNA structure together. The combined cluster of proteins S8, S12 and S17 appears to hold together the shoulder and platform of the 30S subunit. The chain is Small ribosomal subunit protein uS12 from Geobacillus kaustophilus (strain HTA426).